Here is a 190-residue protein sequence, read N- to C-terminus: Holliday junction branch migration complex subunit RuvA (190 aa).

The interval 1-64 (MIGSLTGIIE…DNLTQLYGFL (64 aa)) is domain I. Positions 65–142 (DKQEQDYMRM…KMPIEETLII (78 aa)) are domain II. A region of interest (flexible linker) is located at residue Lys143. A domain III region spans residues 143 to 190 (KEDDSLAALISLGYDKLKAFNAIQEIKANFPDDSIQEIIRKALQKLSQ).

The protein belongs to the RuvA family. As to quaternary structure, homotetramer. Forms an RuvA(8)-RuvB(12)-Holliday junction (HJ) complex. HJ DNA is sandwiched between 2 RuvA tetramers; dsDNA enters through RuvA and exits via RuvB. An RuvB hexamer assembles on each DNA strand where it exits the tetramer. Each RuvB hexamer is contacted by two RuvA subunits (via domain III) on 2 adjacent RuvB subunits; this complex drives branch migration. In the full resolvosome a probable DNA-RuvA(4)-RuvB(12)-RuvC(2) complex forms which resolves the HJ.

The protein localises to the cytoplasm. Functionally, the RuvA-RuvB-RuvC complex processes Holliday junction (HJ) DNA during genetic recombination and DNA repair, while the RuvA-RuvB complex plays an important role in the rescue of blocked DNA replication forks via replication fork reversal (RFR). RuvA specifically binds to HJ cruciform DNA, conferring on it an open structure. The RuvB hexamer acts as an ATP-dependent pump, pulling dsDNA into and through the RuvAB complex. HJ branch migration allows RuvC to scan DNA until it finds its consensus sequence, where it cleaves and resolves the cruciform DNA. The protein is Holliday junction branch migration complex subunit RuvA of Ehrlichia chaffeensis (strain ATCC CRL-10679 / Arkansas).